A 189-amino-acid polypeptide reads, in one-letter code: Small ribosomal subunit protein uS5 (189 aa).

The region spanning 22–85 is the S5 DRBM domain; sequence FVDKLVAINR…EAAKRDLIFV (64 aa).

It belongs to the universal ribosomal protein uS5 family. As to quaternary structure, part of the 30S ribosomal subunit. Contacts proteins S4 and S8.

In terms of biological role, with S4 and S12 plays an important role in translational accuracy. Functionally, located at the back of the 30S subunit body where it stabilizes the conformation of the head with respect to the body. The sequence is that of Small ribosomal subunit protein uS5 from Sinorhizobium medicae (strain WSM419) (Ensifer medicae).